A 168-amino-acid polypeptide reads, in one-letter code: Mediator of RNA polymerase II transcription subunit 7b (168 aa).

A compositionally biased stretch (pro residues) spans 1 to 12 (MATATYPPPPPY). The interval 1–33 (MATATYPPPPPYYRLYKDFSENTDSAPEPPPPI) is disordered. Coiled coils occupy residues 64–92 (KDSN…ADVL) and 132–162 (IMEL…KDAF).

The protein belongs to the Mediator complex subunit 7 family. Component of the Mediator complex. Interacts with MEE14/CBP1.

The protein resides in the nucleus. Functionally, component of the Mediator complex, a coactivator involved in the regulated transcription of nearly all RNA polymerase II-dependent genes. Mediator functions as a bridge to convey information from gene-specific regulatory proteins to the basal RNA polymerase II transcription machinery. The Mediator complex, having a compact conformation in its free form, is recruited to promoters by direct interactions with regulatory proteins and serves for the assembly of a functional pre-initiation complex with RNA polymerase II and the general transcription factors. In Arabidopsis thaliana (Mouse-ear cress), this protein is Mediator of RNA polymerase II transcription subunit 7b (MED7B).